The chain runs to 195 residues: ATP-dependent Clp protease proteolytic subunit (195 aa).

The Nucleophile role is filled by Ser101. His126 is an active-site residue.

It belongs to the peptidase S14 family. In terms of assembly, component of the chloroplastic Clp protease core complex.

The protein resides in the plastid. Its subcellular location is the chloroplast stroma. The catalysed reaction is Hydrolysis of proteins to small peptides in the presence of ATP and magnesium. alpha-casein is the usual test substrate. In the absence of ATP, only oligopeptides shorter than five residues are hydrolyzed (such as succinyl-Leu-Tyr-|-NHMec, and Leu-Tyr-Leu-|-Tyr-Trp, in which cleavage of the -Tyr-|-Leu- and -Tyr-|-Trp bonds also occurs).. Functionally, cleaves peptides in various proteins in a process that requires ATP hydrolysis. Has a chymotrypsin-like activity. Plays a major role in the degradation of misfolded proteins. This is ATP-dependent Clp protease proteolytic subunit from Oltmannsiellopsis viridis (Marine flagellate).